The chain runs to 610 residues: Pheromone-processing carboxypeptidase KEX1 (610 aa).

The N-terminal stretch at 1 to 18 (MSRYFLLACTLALQCVAA) is a signal peptide. Residues 19–494 (SQEDYIVKDL…KEKPPKHHHS (476 aa)) are Lumenal-facing. Asn-68 carries an N-linked (GlcNAc...) asparagine glycan. Ser-176 is an active-site residue. Asn-192 and Asn-196 each carry an N-linked (GlcNAc...) asparagine glycan. The active site involves Asp-371. N-linked (GlcNAc...) asparagine glycosylation is found at Asn-418 and Asn-426. His-429 is a catalytic residue. The segment at 469–491 (KFVEEKQDTDQNEEEEKEKPPKH) is disordered. The chain crosses the membrane as a helical span at residues 495-515 (LTFYVAEVAILAVLAYLLYSF). Residues 516 to 610 (YKSFAKSRKS…QSDEEEFGHR (95 aa)) are Cytoplasmic-facing.

The protein belongs to the peptidase S10 family.

It is found in the golgi apparatus. It localises to the trans-Golgi network membrane. The enzyme catalyses Preferential release of a C-terminal arginine or lysine residue.. In terms of biological role, protease with a carboxypeptidase B-like function involved in the C-terminal processing of the lysine and arginine residues from protein precursors. Promotes cell fusion and is involved in the programmed cell death. This chain is Pheromone-processing carboxypeptidase KEX1 (KEX1), found in Ogataea parapolymorpha (strain ATCC 26012 / BCRC 20466 / JCM 22074 / NRRL Y-7560 / DL-1) (Yeast).